The sequence spans 220 residues: MKTGIITMLFVLYLPVTAFATTLRLSNDIDLLVLDGKKVSSSLLRGADSIELDNGPHQLVFRVEKTIRLSSHEERLYISPPLVISFNTQLISQVNFHLPHLETEREAAHFSTTPRLELLDGDAMPIPVKLDILAITSTAKIIDYETETERYNKADKRASLPQFATMMADDSTLLSGISELDAVPPQSQALTEQRLKYWFKQADPQTRNNFLQWAEKQPPS.

Residues 1–20 (MKTGIITMLFVLYLPVTAFA) form the signal peptide.

It belongs to the UPF0319 family.

In Citrobacter koseri (strain ATCC BAA-895 / CDC 4225-83 / SGSC4696), this protein is UPF0319 protein CKO_02102.